The chain runs to 180 residues: Prorelaxin (180 aa).

The N-terminal stretch at 1–25 is a signal peptide; that stretch reads MLRLFLSHLLGVWLLLSLRARKIPA. 3 disulfide bridges follow: cysteine 33–cysteine 167, cysteine 45–cysteine 180, and cysteine 166–cysteine 171. A propeptide spans 53-154 (connecting peptide); sequence SSQQHREPRQ…RSRLDAHSRI (102 aa).

Belongs to the insulin family. In terms of assembly, heterodimer of a B chain and an A chain linked by two disulfide bonds. Expressed by the placenta. Exclusively detected in cells located in the lamellar placental labyrinth and absent from other placental and non-placental uterine parts.

It is found in the secreted. In terms of biological role, relaxin is an ovarian hormone that acts with estrogen to produce dilatation of the birth canal in many mammals. This is Prorelaxin (RLN) from Felis catus (Cat).